A 485-amino-acid polypeptide reads, in one-letter code: Dipeptide and tripeptide permease C (485 aa).

Residues 1-12 are Cytoplasmic-facing; it reads MKTPSQPRAIYY. A helical membrane pass occupies residues 13 to 33; the sequence is IVAIQIWEYFSFYGMRALLIL. Residues 34-46 lie on the Periplasmic side of the membrane; sequence YLTHQLGFDDNHA. Residues 47–67 form a helical membrane-spanning segment; sequence ISLFSAYASLVYVTPILGGWL. Residues 68–70 are Cytoplasmic-facing; the sequence is ADR. The chain crosses the membrane as a helical span at residues 71–93; the sequence is LLGNRTAVIAGALLMTLGHVVLG. Topologically, residues 94 to 102 are periplasmic; that stretch reads IDTNSTFSL. A helical transmembrane segment spans residues 103-125; the sequence is YLALAIIICGYGLFKSNISCLLG. The Cytoplasmic segment spans residues 126-140; sequence ELYDENDHRRDGGFS. A helical transmembrane segment spans residues 141-161; the sequence is LLYAAGNIGSIAAPIACGLAA. Residues 162–164 are Periplasmic-facing; that stretch reads QWY. Residues 165 to 185 form a helical membrane-spanning segment; it reads GWHVGFALAGGGMFIGLLIFL. Residues 186–208 lie on the Cytoplasmic side of the membrane; it reads SGHRHFQSTRSMDKKALTSVKFA. Residues 209–229 traverse the membrane as a helical segment; it reads LPVWSWLVVMLCLAPVFFTLL. At 230–234 the chain is on the periplasmic side; the sequence is LENDW. Residues 235–255 form a helical membrane-spanning segment; it reads SGYLLAIVCLIAAQIIARMMI. Over 256 to 262 the chain is Cytoplasmic; sequence KFPEHRR. The helical transmembrane segment at 263–283 threads the bilayer; sequence ALWQIVLLMFVGTLFWVLAQQ. At 284 to 307 the chain is on the periplasmic side; sequence GGSTISLFIDRFVNRQAFNIEVPT. Residues 308–328 form a helical membrane-spanning segment; that stretch reads ALFQSVNAIAVMLAGVVLAWL. The Cytoplasmic portion of the chain corresponds to 329 to 340; the sequence is ASPESRGNSTLR. The helical transmembrane segment at 341-361 threads the bilayer; it reads VWLKFAFGLLLMACGFMLLAF. Residues 362-375 lie on the Periplasmic side of the membrane; the sequence is DARHAAADGQASMG. The chain crosses the membrane as a helical span at residues 376 to 396; that stretch reads VMISGLALMGFAELFIDPVAI. The Cytoplasmic portion of the chain corresponds to 397 to 406; that stretch reads AQITRLKMSG. Residues 407–427 form a helical membrane-spanning segment; sequence VLTGIYMLATGAVANWLAGVV. Residues 428-446 are Periplasmic-facing; the sequence is AQQTTESQISGMAIAAYQR. Residues 447 to 467 traverse the membrane as a helical segment; it reads FFSQMGEWTLACVAIIVVLAF. Residues 468–485 lie on the Cytoplasmic side of the membrane; that stretch reads ATRFLFSTPTNMIQESND.

This sequence belongs to the major facilitator superfamily. Proton-dependent oligopeptide transporter (POT/PTR) (TC 2.A.17) family. In terms of assembly, monomer.

The protein resides in the cell inner membrane. Proton-dependent permease that transports di- and tripeptides. Shows significantly higher specificity towards dipeptides than tripeptides. Has a preference for dipeptides with a C-terminal Lys residue. Can bind Ala-Lys, Lys-Ala, Ala-Ala. Can also transport alanine and trialanine. This is Dipeptide and tripeptide permease C from Escherichia coli (strain K12).